The following is a 634-amino-acid chain: DNA-directed RNA polymerase subunit gamma (634 aa).

The Zn(2+) site is built by cysteine 74, cysteine 76, cysteine 89, and cysteine 92. Residues aspartate 471, aspartate 473, and aspartate 475 each coordinate Mg(2+).

Belongs to the RNA polymerase beta' chain family. RpoC1 subfamily. In cyanobacteria the RNAP catalytic core is composed of 2 alpha, 1 beta, 1 beta', 1 gamma and 1 omega subunit. When a sigma factor is associated with the core the holoenzyme is formed, which can initiate transcription. Mg(2+) is required as a cofactor. It depends on Zn(2+) as a cofactor.

It catalyses the reaction RNA(n) + a ribonucleoside 5'-triphosphate = RNA(n+1) + diphosphate. Functionally, DNA-dependent RNA polymerase catalyzes the transcription of DNA into RNA using the four ribonucleoside triphosphates as substrates. In Synechococcus sp. (strain RCC307), this protein is DNA-directed RNA polymerase subunit gamma.